The primary structure comprises 97 residues: Large ribosomal subunit protein bL28 (97 aa).

Belongs to the bacterial ribosomal protein bL28 family.

This is Large ribosomal subunit protein bL28 from Bartonella henselae (strain ATCC 49882 / DSM 28221 / CCUG 30454 / Houston 1) (Rochalimaea henselae).